The primary structure comprises 295 residues: Indole-3-glycerol phosphate synthase (295 aa).

It belongs to the TrpC family.

The enzyme catalyses 1-(2-carboxyphenylamino)-1-deoxy-D-ribulose 5-phosphate + H(+) = (1S,2R)-1-C-(indol-3-yl)glycerol 3-phosphate + CO2 + H2O. It participates in amino-acid biosynthesis; L-tryptophan biosynthesis; L-tryptophan from chorismate: step 4/5. This Prochlorococcus marinus (strain MIT 9301) protein is Indole-3-glycerol phosphate synthase.